Reading from the N-terminus, the 101-residue chain is Small ribosomal subunit protein uS14A (101 aa).

Residues 31 to 69 (IAAPGSSPEERAAAQQELRRQPRDASATRLRNRDAVDGR) are disordered. The span at 38-53 (PEERAAAQQELRRQPR) shows a compositional bias: basic and acidic residues.

This sequence belongs to the universal ribosomal protein uS14 family. In terms of assembly, part of the 30S ribosomal subunit. Contacts proteins S3 and S10.

Its function is as follows. Binds 16S rRNA, required for the assembly of 30S particles and may also be responsible for determining the conformation of the 16S rRNA at the A site. This Saccharopolyspora erythraea (strain ATCC 11635 / DSM 40517 / JCM 4748 / NBRC 13426 / NCIMB 8594 / NRRL 2338) protein is Small ribosomal subunit protein uS14A.